Here is a 217-residue protein sequence, read N- to C-terminus: Probable D-methionine transport system permease protein MetI (217 aa).

Residues 13–207 enclose the ABC transmembrane type-1 domain; that stretch reads TLETLYMGFI…LIVMLSQKLG (195 aa). 5 helical membrane passes run 20–40, 58–78, 81–101, 143–163, and 184–204; these read GFIA…LAFL, VIIN…LLPF, LVVG…VSAI, IPIL…YSAM, and NMIY…MLSQ.

The protein belongs to the binding-protein-dependent transport system permease family. CysTW subfamily.

The protein localises to the cell inner membrane. Part of the binding-protein-dependent transport system for D-methionine. Probably responsible for the translocation of the substrate across the membrane. This Pasteurella multocida (strain Pm70) protein is Probable D-methionine transport system permease protein MetI (metI).